Consider the following 105-residue polypeptide: Large ribosomal subunit protein uL24 (105 aa).

This sequence belongs to the universal ribosomal protein uL24 family. In terms of assembly, part of the 50S ribosomal subunit.

One of two assembly initiator proteins, it binds directly to the 5'-end of the 23S rRNA, where it nucleates assembly of the 50S subunit. In terms of biological role, one of the proteins that surrounds the polypeptide exit tunnel on the outside of the subunit. The sequence is that of Large ribosomal subunit protein uL24 from Vibrio atlanticus (strain LGP32) (Vibrio splendidus (strain Mel32)).